The following is a 909-amino-acid chain: E3 ubiquitin-protein ligase HACE1 (909 aa).

The tract at residues 1 to 21 (MERAMEQLNRLTRSLRRARTV) is N-terminal helix important for homodimerization. 7 ANK repeats span residues 23 to 55 (LPED…NSKF), 64 to 93 (VKRS…NPNY), 97 to 126 (SGCT…DVNI), 130 to 159 (EGLT…DVDV), 163 to 192 (MGQT…DINR), 196 to 226 (SGAT…YLPD), and 228 to 253 (NGVT…QYHP). The interval 398–433 (QDQDAASIPPFEPPGPGSYENLSTGTRESKPDALAG) is disordered. The 336-residue stretch at 574 to 909 (NCAKLKQGIA…HCGSYGYTMA (336 aa)) folds into the HECT domain. The Glycyl thioester intermediate role is filled by cysteine 876.

In terms of assembly, homodimer. The homodimer is autoinhibited and stabilized by its N-terminal helix. Interacts with RAB1 (RAB1A, RAB1B or RAB1C), RAB4 (RAB4A or RAB4B) and RAB11 (RAB11A or RAB11B); in a GTP-dependent manner. Interacts with the 26S proteasomal complex through the 20S core proteasomal subunit. Interacts with RARB. Autoubiquitinated. Expressed in multiple tissues including heart, brain and kidney.

It is found in the golgi apparatus. Its subcellular location is the golgi stack membrane. The protein resides in the cytoplasm. It localises to the endoplasmic reticulum. The enzyme catalyses S-ubiquitinyl-[E2 ubiquitin-conjugating enzyme]-L-cysteine + [acceptor protein]-L-lysine = [E2 ubiquitin-conjugating enzyme]-L-cysteine + N(6)-ubiquitinyl-[acceptor protein]-L-lysine.. It functions in the pathway protein modification; protein ubiquitination. With respect to regulation, sterically autoinhibited in its dimeric state. Its function is as follows. E3 ubiquitin-protein ligase involved in Golgi membrane fusion and regulation of small GTPases. Acts as a regulator of Golgi membrane dynamics during the cell cycle: recruited to Golgi membrane by Rab proteins and regulates postmitotic Golgi membrane fusion. Acts by mediating ubiquitination during mitotic Golgi disassembly, ubiquitination serving as a signal for Golgi reassembly later, after cell division. Specifically binds GTP-bound RAC1, mediating ubiquitination and subsequent degradation of active RAC1, thereby playing a role in host defense against pathogens. May also act as a transcription regulator via its interaction with RARB. This is E3 ubiquitin-protein ligase HACE1 (HACE1) from Homo sapiens (Human).